Consider the following 140-residue polypeptide: MVNLGFVIAEFNRDLTYMMEKLAEEHAQFLGANVVCKVMVPGSFDMPLAIKTLLKKDNIDAVVTIGCVIEGDTEHDEIVVQNAARKIADLSLEFEKPVALGISGPGMTRMQAEDRIDYGKSAVEAAVKMVKRINDIKNSN.

Residues phenylalanine 11, 43 to 45, and 67 to 69 contribute to the 5-amino-6-(D-ribitylamino)uracil site; these read SFD and CVI. 72 to 73 contributes to the (2S)-2-hydroxy-3-oxobutyl phosphate binding site; the sequence is DT. Histidine 75 serves as the catalytic Proton donor. Position 100 (leucine 100) interacts with 5-amino-6-(D-ribitylamino)uracil. Arginine 115 serves as a coordination point for (2S)-2-hydroxy-3-oxobutyl phosphate.

Belongs to the DMRL synthase family. Forms an icosahedral capsid composed of 60 subunits, arranged as a dodecamer of pentamers.

It catalyses the reaction (2S)-2-hydroxy-3-oxobutyl phosphate + 5-amino-6-(D-ribitylamino)uracil = 6,7-dimethyl-8-(1-D-ribityl)lumazine + phosphate + 2 H2O + H(+). It participates in cofactor biosynthesis; riboflavin biosynthesis; riboflavin from 2-hydroxy-3-oxobutyl phosphate and 5-amino-6-(D-ribitylamino)uracil: step 1/2. Functionally, catalyzes the formation of 6,7-dimethyl-8-ribityllumazine by condensation of 5-amino-6-(D-ribitylamino)uracil with 3,4-dihydroxy-2-butanone 4-phosphate. This is the penultimate step in the biosynthesis of riboflavin. The protein is 6,7-dimethyl-8-ribityllumazine synthase of Methanococcus vannielii (strain ATCC 35089 / DSM 1224 / JCM 13029 / OCM 148 / SB).